A 475-amino-acid chain; its full sequence is Ataxin-10 (475 aa).

The residue at position 10 (arginine 10) is an Omega-N-methylarginine. Phosphoserine is present on residues serine 12 and serine 77. A Phosphothreonine modification is found at threonine 82. A Phosphoserine modification is found at serine 430.

This sequence belongs to the ataxin-10 family. Homooligomer. Interacts with GNB2. Interacts with IQCB1. Interacts with OGT. In terms of processing, polyubiquitinated. Post-translationally, phosphorylation at Ser-12 by AURKB promotes the association of ATXN10 with PLK1. Phosphorylation at Ser-77 and Thr-82 by PLK1 may play a role in the regulation of cytokinesis and may stimulate the proteasome-mediated degradation of ATXN10.

Its subcellular location is the cytoplasm. It localises to the perinuclear region. The protein resides in the cytoskeleton. It is found in the cilium basal body. The protein localises to the microtubule organizing center. Its subcellular location is the centrosome. It localises to the centriole. The protein resides in the midbody. In terms of biological role, may play a role in the regulation of cytokinesis. May play a role in signaling by stimulating protein glycosylation. Induces neuritogenesis by activating the Ras-MAP kinase pathway and is necessary for the survival of cerebellar neurons. Does not appear to play a major role in ciliogenesis. This chain is Ataxin-10 (ATXN10), found in Bos taurus (Bovine).